The primary structure comprises 64 residues: Large ribosomal subunit protein bL35 (64 aa).

It belongs to the bacterial ribosomal protein bL35 family.

This Desulforudis audaxviator (strain MP104C) protein is Large ribosomal subunit protein bL35.